A 462-amino-acid chain; its full sequence is DEK domain-containing chromatin-associated protein 1 (462 aa).

2 disordered regions span residues 18-91 and 212-390; these read AVTE…TQGR and KETK…RKEL. The span at 20–32 shows a compositional bias: basic and acidic residues; it reads TEKDTETKKKDEV. Acidic residues predominate over residues 33 to 46; that stretch reads EKDEAMEEKGEEID. Residues 77-91 show a composition bias toward polar residues; the sequence is PRSSGNKPLSITQGR. The segment covering 267-276 has biased composition (acidic residues); the sequence is NGEDDVAPEE. Composition is skewed to basic and acidic residues over residues 277–303, 312–322, and 347–360; these read ENNKSEDTETEDEKDKAKEKTKSTDKK, EKPAAEEEKSI, and QKVDKDDSSKEKGK. Positions 344-351 match the Nuclear localization signal motif; the sequence is SKKQKVDK. Residues 384-439 form the DEK-C domain; sequence EPTRKELHVVVTKILKEVDFNTATLSDILRKLGSHFGIDLMHRKAEVKDIITDAIN. 2 DNA-binding regions span residues 402 to 416 and 431 to 435; these read DFNTATLSDILRKLG and KDIIT. The disordered stretch occupies residues 438–462; sequence INEMSDDDDEKEEDTEDEGEKEGKD. The segment covering 441–462 has biased composition (acidic residues); that stretch reads MSDDDDEKEEDTEDEGEKEGKD.

As to quaternary structure, found in a mRNA splicing-dependent exon junction complex (EJC). Binds specifically histones H3 and H4.

It localises to the nucleus. The protein resides in the nucleolus. In terms of biological role, chromatin-associated protein which contributes to the modulation of chromatin structure (such as super-helical structure of DNA) and function. Binds to chromatin of protein-coding genes throughout the genome to regulate nucleosome occupancy and chromatin accessibility, and to modulate the expression of target genes. The protein is DEK domain-containing chromatin-associated protein 1 of Arabidopsis thaliana (Mouse-ear cress).